A 384-amino-acid polypeptide reads, in one-letter code: Probable beta-1,3-galactosyltransferase 1 (384 aa).

A helical; Signal-anchor for type II membrane protein membrane pass occupies residues 21 to 43; the sequence is SVFFMCLASFCLGMFFTNRMWNI. Asn-73 and Asn-105 each carry an N-linked (GlcNAc...) asparagine glycan.

This sequence belongs to the glycosyltransferase 31 family. Requires Mn(2+) as cofactor.

It localises to the golgi apparatus membrane. It functions in the pathway protein modification; protein glycosylation. Beta-1,3-galactosyltransferase that transfers galactose from UDP-galactose to substrates with a terminal glycosyl residue. This chain is Probable beta-1,3-galactosyltransferase 1 (B3GALT1), found in Arabidopsis thaliana (Mouse-ear cress).